Here is a 473-residue protein sequence, read N- to C-terminus: MGRITEDLIRRNAEHNDCVIFSLEELSLHQQEIERLEHIDKWCRDLKILYLQNNLIGKIENVSKLKKLEYLNLALNNIERIENLEGCEWLTKLDLTVNFIGELSSVKTLTHNIHLKELFLMGNPCADFDGYRQFVVVTLQQLKWLDGKEIERSERIQALQNYTSVEQQIREQEKAYCLRRAKEKEEAQRKLEEENESEDKKKSSTGFDGHWYTDIHTACPSATENQDYPQVPETQEEQHNTKESDDIEDDLAFWNKPSLFTPESRLETLRHMEKQRKAQDKLSEKKKKAKPPRTLITEDGKVLNVNEAKLDFSLKDDEKHNQIILDLAVYRYMDTSLIEVDVQPTYVRVMVKGKPFQLALSTEVQPDRSSAKRSQTTGHLLICMPKVGEMITGGQRTPTSVKTTSTSSREQTNPRKKQIERLEVDPSKHSCPDVSTIVQEKRHRPKRMESQPRDEPSEEDPDFEDNPEVPPLI.

LRR repeat units lie at residues 22 to 43, 45 to 66, 67 to 88, and 89 to 110; these read SLEE…DKWC, DLKI…SKLK, KLEY…EGCE, and WLTK…KTLT. The LRRCT domain occupies 123–161; that stretch reads NPCADFDGYRQFVVVTLQQLKWLDGKEIERSERIQALQN. The stretch at 153 to 205 forms a coiled coil; the sequence is SERIQALQNYTSVEQQIREQEKAYCLRRAKEKEEAQRKLEEENESEDKKKSST. Basic and acidic residues-rich tracts occupy residues 188-202 and 273-283; these read QRKL…DKKK and EKQRKAQDKLS. Disordered stretches follow at residues 188–244, 273–292, and 387–473; these read QRKL…TKES, EKQR…AKPP, and VGEM…PPLI. One can recognise a CS domain in the interval 305 to 402; it reads VNEAKLDFSL…GGQRTPTSVK (98 aa). Positions 397 to 408 are enriched in low complexity; the sequence is TPTSVKTTSTSS. Positions 417–431 are enriched in basic and acidic residues; that stretch reads KQIERLEVDPSKHSC. The span at 456–467 shows a compositional bias: acidic residues; sequence PSEEDPDFEDNP.

The protein belongs to the tilB family. As to quaternary structure, interacts (via CS domain) with ZMYND10 (via C-terminus). As to expression, mainly expressed in cells with motile cilia. Expressed in epithelial cells of the trachea, testis and ependymal cells of the cerebral ventricles. In testis, abundant expression in late prophase of meiosis I with a dramatic decrease after the first meiotic division (at protein level).

It localises to the cytoplasm. The protein localises to the cell projection. It is found in the cilium. Its subcellular location is the dynein axonemal particle. The protein resides in the flagellum. Functionally, involved in dynein arm assembly, is important for expression and transporting outer dynein arm (ODA) proteins from the cytoplasm to the cilia. Acts as a crucial component in the formation and motility of spermatozoal flagella. The sequence is that of Dynein axonemal assembly factor 11 (Dnaaf11) from Mus musculus (Mouse).